We begin with the raw amino-acid sequence, 181 residues long: Photosystem I assembly protein Ycf4 (181 aa).

2 helical membrane passes run 19 to 39 and 61 to 81; these read YFWASLLLVGGLMFLLAGISS and IVMMFYGTLSFGLSIYIMATL.

It belongs to the Ycf4 family.

The protein resides in the plastid. It localises to the chloroplast thylakoid membrane. In terms of biological role, seems to be required for the assembly of the photosystem I complex. In Thalassiosira pseudonana (Marine diatom), this protein is Photosystem I assembly protein Ycf4.